A 141-amino-acid chain; its full sequence is Hemoglobin subunit alpha-1 (141 aa).

The region spanning 1 to 141 (VLSGSDKNNV…VGNVLTAKYR (141 aa)) is the Globin domain. His58 is a binding site for O2. His87 is a binding site for heme b.

Belongs to the globin family. In terms of assembly, heterotetramer of two alpha chains and two beta chains. In terms of tissue distribution, red blood cells.

Functionally, involved in oxygen transport from the lung to the various peripheral tissues. This chain is Hemoglobin subunit alpha-1, found in Stercorarius maccormicki (South polar skua).